The following is a 212-amino-acid chain: N-(5'-phosphoribosyl)anthranilate isomerase (212 aa).

It belongs to the TrpF family.

The enzyme catalyses N-(5-phospho-beta-D-ribosyl)anthranilate = 1-(2-carboxyphenylamino)-1-deoxy-D-ribulose 5-phosphate. It functions in the pathway amino-acid biosynthesis; L-tryptophan biosynthesis; L-tryptophan from chorismate: step 3/5. The polypeptide is N-(5'-phosphoribosyl)anthranilate isomerase (Roseiflexus castenholzii (strain DSM 13941 / HLO8)).